Consider the following 204-residue polypeptide: Apoptosis regulator R11 (204 aa).

Positions 101-120 match the BH1 motif; sequence ELFRDGTNWGRIVAFFSFGR. The BH2 signature appears at 152–167; the sequence is PWMQENGGWEAFVGLY. Residues 181 to 198 form a helical membrane-spanning segment; sequence RFGRLLTIVMLTGVFALV.

The protein belongs to the Bcl-2 family.

It is found in the membrane. Confers strong protection against cell death. The polypeptide is Apoptosis regulator R11 (Xenopus laevis (African clawed frog)).